The sequence spans 399 residues: Semaphorin-like protein 139 (399 aa).

The first 14 residues, 1–14, serve as a signal peptide directing secretion; that stretch reads MIPLLFILFYFTNC. Positions 15 to 399 constitute a Sema domain; the sequence is IEWHKFETSE…IPRMKKILKM (385 aa).

This sequence belongs to the semaphorin family. Interacts with host VESPR.

It is found in the secreted. Acts as a semaphorin-like protein and binds to host plexin C1 receptor. May alter the movement of plexin C1-expressing cells including dendritic cells, monocytes, or granulocytes in the proximity of infected cells. May also regulate host cell cytoskeleton of neighboring cells to improve viral infection. The chain is Semaphorin-like protein 139 (EVM139) from Ectromelia virus (strain Moscow) (ECTV).